An 89-amino-acid chain; its full sequence is Small ribosomal subunit protein uS15 (89 aa).

This sequence belongs to the universal ribosomal protein uS15 family. Part of the 30S ribosomal subunit. Forms a bridge to the 50S subunit in the 70S ribosome, contacting the 23S rRNA.

Its function is as follows. One of the primary rRNA binding proteins, it binds directly to 16S rRNA where it helps nucleate assembly of the platform of the 30S subunit by binding and bridging several RNA helices of the 16S rRNA. Forms an intersubunit bridge (bridge B4) with the 23S rRNA of the 50S subunit in the ribosome. This Trichormus variabilis (strain ATCC 29413 / PCC 7937) (Anabaena variabilis) protein is Small ribosomal subunit protein uS15.